The sequence spans 206 residues: MSANELTSGDFTESGEPFKLFAEWLKEAEVSEPNDPNAVALATVDEDGLPNVRMVLLKGFDDDGFVFYTNFESQKGREILGQKKAAMCFHWKSLRRQVRLRGPVEIVTDAEADAYFKTRARGSRIGAWASRQSRPLESRFALEKAVAEYTARYAIGEIPRPAHWSGFRIRPTSIEFWKDQKFRLHDRVEFRRPSPEGEWDKVRMYP.

FMN contacts are provided by residues 53 to 58, 68 to 69, lysine 75, and glutamine 97; these read RMVLLK and YT. Lysine 58 is a binding site for substrate. Substrate is bound by residues tyrosine 115, arginine 119, and serine 123. FMN is bound by residues 132–133 and tryptophan 177; that span reads QS. 183–185 contacts substrate; the sequence is RLH. Residue arginine 187 coordinates FMN.

It belongs to the pyridoxamine 5'-phosphate oxidase family. Homodimer. FMN is required as a cofactor.

It catalyses the reaction pyridoxamine 5'-phosphate + O2 + H2O = pyridoxal 5'-phosphate + H2O2 + NH4(+). The enzyme catalyses pyridoxine 5'-phosphate + O2 = pyridoxal 5'-phosphate + H2O2. It participates in cofactor metabolism; pyridoxal 5'-phosphate salvage; pyridoxal 5'-phosphate from pyridoxamine 5'-phosphate: step 1/1. Its pathway is cofactor metabolism; pyridoxal 5'-phosphate salvage; pyridoxal 5'-phosphate from pyridoxine 5'-phosphate: step 1/1. Its function is as follows. Catalyzes the oxidation of either pyridoxine 5'-phosphate (PNP) or pyridoxamine 5'-phosphate (PMP) into pyridoxal 5'-phosphate (PLP). This Rhizobium johnstonii (strain DSM 114642 / LMG 32736 / 3841) (Rhizobium leguminosarum bv. viciae) protein is Pyridoxine/pyridoxamine 5'-phosphate oxidase.